We begin with the raw amino-acid sequence, 266 residues long: Phosphatidylglycerol--prolipoprotein diacylglyceryl transferase (266 aa).

The next 7 membrane-spanning stretches (helical) occupy residues 17–37 (LKIH…WLLA), 56–76 (LVFW…VLFY), 92–112 (WKGG…VWWF), 120–140 (FFQL…AGRI), 171–191 (PSQL…LWLF), 199–219 (ASVS…VEFV), and 233–253 (WLTM…ALMV). Arginine 139 lines the a 1,2-diacyl-sn-glycero-3-phospho-(1'-sn-glycerol) pocket.

The protein belongs to the Lgt family.

Its subcellular location is the cell inner membrane. It carries out the reaction L-cysteinyl-[prolipoprotein] + a 1,2-diacyl-sn-glycero-3-phospho-(1'-sn-glycerol) = an S-1,2-diacyl-sn-glyceryl-L-cysteinyl-[prolipoprotein] + sn-glycerol 1-phosphate + H(+). Its pathway is protein modification; lipoprotein biosynthesis (diacylglyceryl transfer). In terms of biological role, catalyzes the transfer of the diacylglyceryl group from phosphatidylglycerol to the sulfhydryl group of the N-terminal cysteine of a prolipoprotein, the first step in the formation of mature lipoproteins. The sequence is that of Phosphatidylglycerol--prolipoprotein diacylglyceryl transferase from Pseudomonas aeruginosa (strain UCBPP-PA14).